Here is a 158-residue protein sequence, read N- to C-terminus: Ribosome-binding factor A (158 aa).

The segment at 127 to 158 is disordered; that stretch reads RQGAVHAGDADPYKESAAEEPAAYEDDERRPD. A compositionally biased stretch (basic and acidic residues) spans 134-143; sequence GDADPYKESA.

It belongs to the RbfA family. As to quaternary structure, monomer. Binds 30S ribosomal subunits, but not 50S ribosomal subunits or 70S ribosomes.

The protein resides in the cytoplasm. In terms of biological role, one of several proteins that assist in the late maturation steps of the functional core of the 30S ribosomal subunit. Associates with free 30S ribosomal subunits (but not with 30S subunits that are part of 70S ribosomes or polysomes). Required for efficient processing of 16S rRNA. May interact with the 5'-terminal helix region of 16S rRNA. In Mycobacteroides abscessus (strain ATCC 19977 / DSM 44196 / CCUG 20993 / CIP 104536 / JCM 13569 / NCTC 13031 / TMC 1543 / L948) (Mycobacterium abscessus), this protein is Ribosome-binding factor A.